The following is a 208-amino-acid chain: Thioredoxin domain-containing protein 9 (208 aa).

Residues 68–179 enclose the Thioredoxin domain; that stretch reads YEEVADEKEF…MENRLARSEV (112 aa).

Expressed throughout the body with high expression in the nervous system, including the ventral nerve cord and tail neurons, and vulva.

It is found in the nucleus. Its subcellular location is the cytoplasm. In terms of biological role, required for normal microtubule organization and function. Regulates tubulin acetylation in ALM and PLM neurons. This Caenorhabditis elegans protein is Thioredoxin domain-containing protein 9.